The sequence spans 289 residues: ATP phosphoribosyltransferase (289 aa).

Belongs to the ATP phosphoribosyltransferase family. Long subfamily. Mg(2+) serves as cofactor.

The protein localises to the cytoplasm. It carries out the reaction 1-(5-phospho-beta-D-ribosyl)-ATP + diphosphate = 5-phospho-alpha-D-ribose 1-diphosphate + ATP. It participates in amino-acid biosynthesis; L-histidine biosynthesis; L-histidine from 5-phospho-alpha-D-ribose 1-diphosphate: step 1/9. Its activity is regulated as follows. Feedback inhibited by histidine. Functionally, catalyzes the condensation of ATP and 5-phosphoribose 1-diphosphate to form N'-(5'-phosphoribosyl)-ATP (PR-ATP). Has a crucial role in the pathway because the rate of histidine biosynthesis seems to be controlled primarily by regulation of HisG enzymatic activity. In Methanosarcina mazei (strain ATCC BAA-159 / DSM 3647 / Goe1 / Go1 / JCM 11833 / OCM 88) (Methanosarcina frisia), this protein is ATP phosphoribosyltransferase.